Reading from the N-terminus, the 345-residue chain is Heat-inducible transcription repressor HrcA (345 aa).

The protein belongs to the HrcA family.

Functionally, negative regulator of class I heat shock genes (grpE-dnaK-dnaJ and groELS operons). Prevents heat-shock induction of these operons. In Zymomonas mobilis subsp. mobilis (strain ATCC 31821 / ZM4 / CP4), this protein is Heat-inducible transcription repressor HrcA.